An 825-amino-acid chain; its full sequence is Neuroligin-3 (825 aa).

A signal peptide spans methionine 1–threonine 34. Over glutamine 35–serine 686 the chain is Extracellular. Asparagine 95 carries N-linked (GlcNAc...) asparagine glycosylation. A disulfide bridge connects residues cysteine 103 and cysteine 138. The interval serine 151 to arginine 172 is disordered. A compositionally biased stretch (acidic residues) spans aspartate 159–isoleucine 171. Cystine bridges form between cysteine 317–cysteine 328 and cysteine 487–cysteine 521. Asparagine 522 carries an N-linked (GlcNAc...) asparagine glycan. 2 stretches are compositionally biased toward polar residues: residues threonine 622–serine 633 and alanine 654–glycine 666. Residues threonine 622–glutamine 668 form a disordered region. A helical transmembrane segment spans residues valine 687–tyrosine 707. At tyrosine 708–valine 825 the chain is on the cytoplasmic side. Serine 722 carries the post-translational modification Phosphoserine. Tyrosine 769 is subject to Phosphotyrosine.

It belongs to the type-B carboxylesterase/lipase family. As to quaternary structure, homodimer, and heterodimer with NLGN1 and NLGN2. Interacts with neurexins NRXN1, NRXN2 and NRXN3. Interaction with neurexins is mediated by heparan sulfate glycan modification on neurexin. Interacts (via its C-terminus) with DLG4/PSD-95 (via PDZ domain 3). Brain and arteries (at protein level). Detected in heart, brain, spleen, lung, liver, skeletal muscle, kidney and testis. Expressed in olfactory bulb and olfactory epithelium. Found in olfactory ensheathing glia but not in olfactory neurons, and in developing peripheral glia.

It localises to the cell membrane. The protein localises to the synapse. In terms of biological role, cell surface protein involved in cell-cell-interactions via its interactions with neurexin family members. Plays a role in synapse function and synaptic signal transmission, and probably mediates its effects by recruiting and clustering other synaptic proteins. May promote the initial formation of synapses, but is not essential for this. May also play a role in glia-glia or glia-neuron interactions in the developing peripheral nervous system. In Mus musculus (Mouse), this protein is Neuroligin-3 (Nlgn3).